We begin with the raw amino-acid sequence, 276 residues long: Large ribosomal subunit protein uL2 (276 aa).

2 disordered regions span residues 14-58 (RNAS…GGGH) and 219-276 (PITR…KNRK). Polar residues predominate over residues 16 to 27 (ASVSDFSELTRS). Over residues 255–276 (RRPKKASNKMIVRRRPSGKNRK) the composition is skewed to basic residues.

The protein belongs to the universal ribosomal protein uL2 family. Part of the 50S ribosomal subunit. Forms a bridge to the 30S subunit in the 70S ribosome.

In terms of biological role, one of the primary rRNA binding proteins. Required for association of the 30S and 50S subunits to form the 70S ribosome, for tRNA binding and peptide bond formation. It has been suggested to have peptidyltransferase activity; this is somewhat controversial. Makes several contacts with the 16S rRNA in the 70S ribosome. The protein is Large ribosomal subunit protein uL2 of Bifidobacterium longum (strain DJO10A).